The following is a 427-amino-acid chain: MSAIVDIIGREILDSRGNPTVECDVLLESGTMGRAAVPSGASTGSREAIELRDGEAGRYGGKGVLKAVEHINTEISEAIMGLDASEQAFLDKTLLELDGTDNKSRLGANAMLAVSMAVAKAAAEEAGLPLYRYFGGSGAMQLPVPMMNIVNGGAHANNSLDIQEFMIVPVSQPTFREALRCGAEVFHALKKILSDRGMSTAVGDEGGFAPNFGSNDECLSTILQAIEKAGYRAGEDVLLALDCAASEFYHDGKYQLAGEGLQLSSTEFTDYLANLADKFPIVSIEDGMHESDWAGWKTLTDKLGKKVQLVGDDLFVTNTRILKEGIEKGIANSILIKINQIGTLTETFAAIEMAKRAGYTAVISHRSGETEDSTIADIAVGLNAGQIKTGSLSRSDRISKYNQLLRIEEDLGDIASYPGKSAFYNLR.

(2R)-2-phosphoglycerate is bound at residue Q163. The active-site Proton donor is the E205. D242, E285, and D312 together coordinate Mg(2+). Positions 337, 366, 367, and 388 each coordinate (2R)-2-phosphoglycerate. K337 (proton acceptor) is an active-site residue.

The protein belongs to the enolase family. It depends on Mg(2+) as a cofactor.

The protein localises to the cytoplasm. It is found in the secreted. Its subcellular location is the cell surface. The catalysed reaction is (2R)-2-phosphoglycerate = phosphoenolpyruvate + H2O. It functions in the pathway carbohydrate degradation; glycolysis; pyruvate from D-glyceraldehyde 3-phosphate: step 4/5. In terms of biological role, catalyzes the reversible conversion of 2-phosphoglycerate (2-PG) into phosphoenolpyruvate (PEP). It is essential for the degradation of carbohydrates via glycolysis. In Paraburkholderia xenovorans (strain LB400), this protein is Enolase.